A 396-amino-acid chain; its full sequence is MAKLNAYFGEYGGQYVPQILVPALKQLEQAFIDAQEDPEFRSEFMTLLQEYAGRPTALTLTRNLTKGTKTKLYLKREDLLHGGAHKTNQVLGQALLAKRMGKHEIIAETGAGQHGVATALACALLGLKCRVYMGAKDVERQSPNVFRMKLMGAEVIPVHSGSATLKDACNEALRDWSGSYEDAHYLLGTAAGPHPFPTIVREFQRMIGEETKNQILAREGRLPDAVIACVGGGSNAIGMFADFIEEESVRLIGVEPAGKGIDTDQHGAPLKHGKTGIFFGMKAPLMQDENGQVEESYSVSAGLDFPSVGPQHAHLNAIGRAEYDNVTDDEALEAFQELARSEGIIPALESSHALAHALRMARENPEKEQLLVVNLSGRGDKDIFTVHAILEEKGVI.

Lys86 is modified (N6-(pyridoxal phosphate)lysine).

The protein belongs to the TrpB family. As to quaternary structure, tetramer of two alpha and two beta chains. Pyridoxal 5'-phosphate serves as cofactor.

It carries out the reaction (1S,2R)-1-C-(indol-3-yl)glycerol 3-phosphate + L-serine = D-glyceraldehyde 3-phosphate + L-tryptophan + H2O. It participates in amino-acid biosynthesis; L-tryptophan biosynthesis; L-tryptophan from chorismate: step 5/5. Functionally, the beta subunit is responsible for the synthesis of L-tryptophan from indole and L-serine. The protein is Tryptophan synthase beta chain 1 (trpB1) of Vibrio parahaemolyticus serotype O3:K6 (strain RIMD 2210633).